Consider the following 648-residue polypeptide: Probable LRR receptor-like serine/threonine-protein kinase At4g30520 (648 aa).

Positions Met-1–Ser-30 are cleaved as a signal peptide. Over Ser-31–Leu-238 the chain is Extracellular. N-linked (GlcNAc...) asparagine glycosylation is found at Asn-99 and Asn-112. 4 LRR repeats span residues Leu-100 to Pro-125, Leu-127 to Leu-148, Ser-149 to Ile-172, and His-174 to Val-199. N-linked (GlcNAc...) asparagine glycosylation is found at Asn-158 and Asn-184. Residues Ala-239 to Phe-259 traverse the membrane as a helical segment. Residues Cys-260 to Arg-648 lie on the Cytoplasmic side of the membrane. Residue Thr-300 is modified to Phosphothreonine. The region spanning Phe-303–Ala-582 is the Protein kinase domain. Leu-309 to Val-317 contacts ATP. The residue at position 326 (Thr-326) is a Phosphothreonine. Lys-331 is a binding site for ATP. 2 positions are modified to phosphoserine: Ser-384 and Ser-387. Residue Asp-426 is the Proton acceptor of the active site. Phosphothreonine is present on residues Thr-459, Thr-460, and Thr-465. Tyr-473 is subject to Phosphotyrosine. Residue Ser-475 is modified to Phosphoserine. At Thr-476 the chain carries Phosphothreonine. A Phosphoserine modification is found at Ser-480. Thr-555 carries the post-translational modification Phosphothreonine.

Belongs to the protein kinase superfamily. Ser/Thr protein kinase family.

The protein localises to the cell membrane. The catalysed reaction is L-seryl-[protein] + ATP = O-phospho-L-seryl-[protein] + ADP + H(+). It catalyses the reaction L-threonyl-[protein] + ATP = O-phospho-L-threonyl-[protein] + ADP + H(+). This chain is Probable LRR receptor-like serine/threonine-protein kinase At4g30520, found in Arabidopsis thaliana (Mouse-ear cress).